A 72-amino-acid chain; its full sequence is Alpha-elapitoxin-Ast2b (72 aa).

Cystine bridges form between Cys3-Cys20, Cys13-Cys41, Cys26-Cys30, Cys45-Cys56, and Cys57-Cys62. The residue at position 72 (Arg72) is an Arginine amide.

Belongs to the three-finger toxin family. Long-chain subfamily. Type II alpha-neurotoxin sub-subfamily. Expressed by the venom gland.

It is found in the secreted. In terms of biological role, binds with high affinity to muscular (alpha-1/CHRNA1) and neuronal (alpha-7/CHRNA7) nicotinic acetylcholine receptor (nAChR) and inhibits acetylcholine from binding to the receptor, thereby impairing neuromuscular and neuronal transmission. The chain is Alpha-elapitoxin-Ast2b from Hydrophis stokesii (Stokes's sea snake).